We begin with the raw amino-acid sequence, 173 residues long: Large ribosomal subunit protein uL5 (173 aa).

It belongs to the universal ribosomal protein uL5 family. Component of the large ribosomal subunit.

It localises to the nucleus. The protein localises to the cytoplasm. In terms of biological role, component of the ribosome, a large ribonucleoprotein complex responsible for the synthesis of proteins in the cell. The small ribosomal subunit (SSU) binds messenger RNAs (mRNAs) and translates the encoded message by selecting cognate aminoacyl-transfer RNA (tRNA) molecules. The large subunit (LSU) contains the ribosomal catalytic site termed the peptidyl transferase center (PTC), which catalyzes the formation of peptide bonds, thereby polymerizing the amino acids delivered by tRNAs into a polypeptide chain. The nascent polypeptides leave the ribosome through a tunnel in the LSU and interact with protein factors that function in enzymatic processing, targeting, and the membrane insertion of nascent chains at the exit of the ribosomal tunnel. In Encephalitozoon cuniculi (strain GB-M1) (Microsporidian parasite), this protein is Large ribosomal subunit protein uL5 (RPL11).